Here is a 371-residue protein sequence, read N- to C-terminus: Putative RNA-binding protein Luc7-like 1 (371 aa).

Coiled-coil stretches lie at residues 87 to 177 (MDHL…RNSM) and 218 to 259 (FIQI…LSRR). A compositionally biased stretch (basic and acidic residues) spans 232-257 (VAEKQEKRNQDRLRRREEREREERLS). Residues 232-371 (VAEKQEKRNQ…RSEEKEAGEI (140 aa)) are disordered. Residues 258–317 (RRSGSRTRDRRRSRSRDRRRRRSRSTSRERRKLSRSRSRDRHRRHRSRSRSHSRGHRRAS) are compositionally biased toward basic residues. Basic and acidic residues-rich tracts occupy residues 318 to 351 (RDRS…DWRL) and 361 to 371 (RRSEEKEAGEI). 3 positions are modified to phosphoserine: S332, S336, and S363.

This sequence belongs to the Luc7 family. As to expression, ubiquitous.

May bind to RNA via its Arg/Ser-rich domain. This chain is Putative RNA-binding protein Luc7-like 1 (LUC7L), found in Homo sapiens (Human).